The following is a 461-amino-acid chain: Coronin-1A (461 aa).

An N-acetylserine modification is found at S2. Residue S2 is modified to Phosphoserine; by PKC. 7 WD repeats span residues 13–63, 73–110, 123–160, 164–204, 207–251, 258–296, and 302–349; these read HVFG…LVLP, NVPL…MVWE, PVIT…LVWD, GAAV…RVIE, KGTV…ALWD, PLSL…RYFE, and PFLH…EPIA. A compositionally biased stretch (basic and acidic residues) spans 403 to 418; sequence ELRVNRGLDSARRRAT. The tract at residues 403 to 434 is disordered; that stretch reads ELRVNRGLDSARRRATPEPSGTPSSDTVSRLE. S412 is modified (phosphoserine; by PKC). Position 418 is a phosphothreonine (T418). A compositionally biased stretch (polar residues) spans 421 to 430; sequence PSGTPSSDTV. S422 is subject to Phosphoserine. Residues 424-461 adopt a coiled-coil conformation; the sequence is TPSSDTVSRLEEDVRNLNAIVQKLQERLDRLEETVQAK.

This sequence belongs to the WD repeat coronin family. In terms of assembly, binds actin. Post-translationally, phosphorylation at Ser-412 by PKC strongly down-regulates the association with actin. Polyubiquitinated by RNF128 with 'Lys-48'-linked chains, leading to proteasomal degradation. In terms of tissue distribution, expressed in spleen, lymph nodes, thymus, brain and at very lower levels in lung. Also expressed in cells of the lymphoid/myeloid lineage. Not expressed in Kuffper cells.

The protein resides in the cytoplasm. Its subcellular location is the cytoskeleton. The protein localises to the cell cortex. It is found in the cytoplasmic vesicle. It localises to the phagosome membrane. May be a crucial component of the cytoskeleton of highly motile cells, functioning both in the invagination of large pieces of plasma membrane, as well as in forming protrusions of the plasma membrane involved in cell locomotion. In mycobacteria-infected cells, its retention on the phagosomal membrane prevents fusion between phagosomes and lysosomes. This chain is Coronin-1A (Coro1a), found in Mus musculus (Mouse).